Consider the following 321-residue polypeptide: Mitochondrial thiamine pyrophosphate carrier 1 (321 aa).

6 consecutive transmembrane segments (helical) span residues 12-28 (GTRR…GLVS), 91-107 (LMYV…YRTT), 126-146 (FVAG…LDLL), 184-200 (AAVG…FATY), 221-237 (AAGV…MFPL), and 284-301 (GLTV…VTMW). Solcar repeat units follow at residues 12–110 (GTRR…TTQA), 120–206 (PPSA…LRPP), and 214–309 (PFGS…SLRL).

This sequence belongs to the mitochondrial carrier (TC 2.A.29) family.

Its subcellular location is the mitochondrion inner membrane. Its function is as follows. Mitochondrial transporter that mediates uptake of thiamine pyrophosphate (ThPP) into mitochondria. This chain is Mitochondrial thiamine pyrophosphate carrier 1 (tpc1), found in Aspergillus niger (strain ATCC MYA-4892 / CBS 513.88 / FGSC A1513).